Reading from the N-terminus, the 142-residue chain is Large ribosomal subunit protein uL11 (142 aa).

This sequence belongs to the universal ribosomal protein uL11 family. Part of the ribosomal stalk of the 50S ribosomal subunit. Interacts with L10 and the large rRNA to form the base of the stalk. L10 forms an elongated spine to which L12 dimers bind in a sequential fashion forming a multimeric L10(L12)X complex. One or more lysine residues are methylated.

Its function is as follows. Forms part of the ribosomal stalk which helps the ribosome interact with GTP-bound translation factors. This Vibrio campbellii (strain ATCC BAA-1116) protein is Large ribosomal subunit protein uL11.